The primary structure comprises 175 residues: ATP synthase subunit b 2 (175 aa).

A helical transmembrane segment spans residues 20–40 (LIFWTTITFVLVLIILKKIAW).

Belongs to the ATPase B chain family. F-type ATPases have 2 components, F(1) - the catalytic core - and F(0) - the membrane proton channel. F(1) has five subunits: alpha(3), beta(3), gamma(1), delta(1), epsilon(1). F(0) has four main subunits: a(1), b(2) and c(10-14). The alpha and beta chains form an alternating ring which encloses part of the gamma chain. F(1) is attached to F(0) by a central stalk formed by the gamma and epsilon chains, while a peripheral stalk is formed by the delta and b chains.

The protein resides in the cell inner membrane. Functionally, f(1)F(0) ATP synthase produces ATP from ADP in the presence of a proton or sodium gradient. F-type ATPases consist of two structural domains, F(1) containing the extramembraneous catalytic core and F(0) containing the membrane proton channel, linked together by a central stalk and a peripheral stalk. During catalysis, ATP synthesis in the catalytic domain of F(1) is coupled via a rotary mechanism of the central stalk subunits to proton translocation. Component of the F(0) channel, it forms part of the peripheral stalk, linking F(1) to F(0). In Chlorobium luteolum (strain DSM 273 / BCRC 81028 / 2530) (Pelodictyon luteolum), this protein is ATP synthase subunit b 2.